A 251-amino-acid chain; its full sequence is CDP-diacylglycerol pyrophosphatase (251 aa).

The helical transmembrane segment at 4 to 24 (AGLLFLVMIVIAVVAAGIGYW) threads the bilayer.

It belongs to the Cdh family.

The protein localises to the cell inner membrane. It catalyses the reaction a CDP-1,2-diacyl-sn-glycerol + H2O = a 1,2-diacyl-sn-glycero-3-phosphate + CMP + 2 H(+). It participates in phospholipid metabolism; CDP-diacylglycerol degradation; phosphatidate from CDP-diacylglycerol: step 1/1. The polypeptide is CDP-diacylglycerol pyrophosphatase (Escherichia coli (strain ATCC 8739 / DSM 1576 / NBRC 3972 / NCIMB 8545 / WDCM 00012 / Crooks)).